The chain runs to 874 residues: Alanine--tRNA ligase (874 aa).

Zn(2+) is bound by residues histidine 562, histidine 566, cysteine 664, and histidine 668.

This sequence belongs to the class-II aminoacyl-tRNA synthetase family. Zn(2+) is required as a cofactor.

The protein resides in the cytoplasm. The catalysed reaction is tRNA(Ala) + L-alanine + ATP = L-alanyl-tRNA(Ala) + AMP + diphosphate. Its function is as follows. Catalyzes the attachment of alanine to tRNA(Ala) in a two-step reaction: alanine is first activated by ATP to form Ala-AMP and then transferred to the acceptor end of tRNA(Ala). Also edits incorrectly charged Ser-tRNA(Ala) and Gly-tRNA(Ala) via its editing domain. The polypeptide is Alanine--tRNA ligase (Neisseria meningitidis serogroup C / serotype 2a (strain ATCC 700532 / DSM 15464 / FAM18)).